Here is a 644-residue protein sequence, read N- to C-terminus: ATP-dependent zinc metalloprotease FtsH (644 aa).

Residues Met-1–Asn-4 lie on the Cytoplasmic side of the membrane. A helical transmembrane segment spans residues Leu-5–Ser-25. Residues Glu-26 to Leu-98 are Periplasmic-facing. Residues Leu-99–Phe-119 form a helical membrane-spanning segment. The Cytoplasmic portion of the chain corresponds to Met-120 to Lys-644. Position 192–199 (Gly-192–Thr-199) interacts with ATP. His-414 is a binding site for Zn(2+). Glu-415 is an active-site residue. His-418 and Asp-492 together coordinate Zn(2+). Positions Val-598–Lys-644 are disordered. Over residues Asn-632 to Lys-644 the composition is skewed to polar residues.

The protein in the central section; belongs to the AAA ATPase family. This sequence in the C-terminal section; belongs to the peptidase M41 family. In terms of assembly, homohexamer. It depends on Zn(2+) as a cofactor.

Its subcellular location is the cell inner membrane. Functionally, acts as a processive, ATP-dependent zinc metallopeptidase for both cytoplasmic and membrane proteins. Plays a role in the quality control of integral membrane proteins. The sequence is that of ATP-dependent zinc metalloprotease FtsH from Escherichia coli O157:H7.